A 245-amino-acid polypeptide reads, in one-letter code: NAD(P)H-quinone oxidoreductase subunit K (245 aa).

Positions 58, 59, 123, and 154 each coordinate [4Fe-4S] cluster.

It belongs to the complex I 20 kDa subunit family. As to quaternary structure, NDH-1 can be composed of about 15 different subunits; different subcomplexes with different compositions have been identified which probably have different functions. It depends on [4Fe-4S] cluster as a cofactor.

It is found in the cellular thylakoid membrane. The catalysed reaction is a plastoquinone + NADH + (n+1) H(+)(in) = a plastoquinol + NAD(+) + n H(+)(out). It catalyses the reaction a plastoquinone + NADPH + (n+1) H(+)(in) = a plastoquinol + NADP(+) + n H(+)(out). Its function is as follows. NDH-1 shuttles electrons from an unknown electron donor, via FMN and iron-sulfur (Fe-S) centers, to quinones in the respiratory and/or the photosynthetic chain. The immediate electron acceptor for the enzyme in this species is believed to be plastoquinone. Couples the redox reaction to proton translocation, and thus conserves the redox energy in a proton gradient. Cyanobacterial NDH-1 also plays a role in inorganic carbon-concentration. This is NAD(P)H-quinone oxidoreductase subunit K from Nostoc sp. (strain PCC 7120 / SAG 25.82 / UTEX 2576).